The sequence spans 259 residues: 1-(5-phosphoribosyl)-5-[(5-phosphoribosylamino)methylideneamino] imidazole-4-carboxamide isomerase (259 aa).

Asp8 (proton acceptor) is an active-site residue. The active-site Proton donor is the Asp129.

Belongs to the HisA/HisF family.

The protein resides in the cytoplasm. The catalysed reaction is 1-(5-phospho-beta-D-ribosyl)-5-[(5-phospho-beta-D-ribosylamino)methylideneamino]imidazole-4-carboxamide = 5-[(5-phospho-1-deoxy-D-ribulos-1-ylimino)methylamino]-1-(5-phospho-beta-D-ribosyl)imidazole-4-carboxamide. The protein operates within amino-acid biosynthesis; L-histidine biosynthesis; L-histidine from 5-phospho-alpha-D-ribose 1-diphosphate: step 4/9. The protein is 1-(5-phosphoribosyl)-5-[(5-phosphoribosylamino)methylideneamino] imidazole-4-carboxamide isomerase of Pelotomaculum thermopropionicum (strain DSM 13744 / JCM 10971 / SI).